The sequence spans 870 residues: Outer membrane usher protein FimD (870 aa).

The N-terminal stretch at 1-27 is a signal peptide; that stretch reads MKKTTWFAGRFPGYVSPLSSVALSVLA. A disulfide bridge links Cys-843 with Cys-865.

It belongs to the fimbrial export usher family.

It localises to the cell outer membrane. In terms of biological role, involved in the export and assembly of FimA fimbrial subunits across the outer membrane. The sequence is that of Outer membrane usher protein FimD (fimD) from Salmonella typhimurium (strain LT2 / SGSC1412 / ATCC 700720).